We begin with the raw amino-acid sequence, 445 residues long: N-succinylarginine dihydrolase (445 aa).

Residues 19 to 28 (AGLSFGNVAS), Asn110, and 137 to 138 (HR) contribute to the substrate site. The active site involves Glu174. Arg214 provides a ligand contact to substrate. Residue His250 is part of the active site. Substrate contacts are provided by Asp252 and Asn363. Catalysis depends on Cys369, which acts as the Nucleophile.

Belongs to the succinylarginine dihydrolase family. Homodimer.

The enzyme catalyses N(2)-succinyl-L-arginine + 2 H2O + 2 H(+) = N(2)-succinyl-L-ornithine + 2 NH4(+) + CO2. Its pathway is amino-acid degradation; L-arginine degradation via AST pathway; L-glutamate and succinate from L-arginine: step 2/5. Catalyzes the hydrolysis of N(2)-succinylarginine into N(2)-succinylornithine, ammonia and CO(2). This Shewanella pealeana (strain ATCC 700345 / ANG-SQ1) protein is N-succinylarginine dihydrolase.